Here is a 439-residue protein sequence, read N- to C-terminus: 23S rRNA (uracil(1939)-C(5))-methyltransferase RlmD (439 aa).

The region spanning 5-63 is the TRAM domain; that stretch reads RKLEHKTYKLNIESFSHEGRGIAHFEDKIIFVSDALPGELVIANRTFSCAKFEEADAKE. C76, C82, C85, and C164 together coordinate [4Fe-4S] cluster. S-adenosyl-L-methionine contacts are provided by Q271, F300, N305, E321, D348, and D370. The active-site Nucleophile is C396.

Belongs to the class I-like SAM-binding methyltransferase superfamily. RNA M5U methyltransferase family. RlmD subfamily.

It catalyses the reaction uridine(1939) in 23S rRNA + S-adenosyl-L-methionine = 5-methyluridine(1939) in 23S rRNA + S-adenosyl-L-homocysteine + H(+). Its function is as follows. Catalyzes the formation of 5-methyl-uridine at position 1939 (m5U1939) in 23S rRNA. This chain is 23S rRNA (uracil(1939)-C(5))-methyltransferase RlmD, found in Vesicomyosocius okutanii subsp. Calyptogena okutanii (strain HA).